The chain runs to 498 residues: Acetylcholine receptor subunit alpha-type acr-16 (498 aa).

The N-terminal stretch at 1–19 is a signal peptide; it reads MSVCTLLISCAILAAPTLG. Over 20–230 the chain is Extracellular; it reads SLQERRLYED…FYLHMRRRTL (211 aa). 2 N-linked (GlcNAc...) asparagine glycosylation sites follow: asparagine 43 and asparagine 93. 2 disulfides stabilise this stretch: cysteine 147/cysteine 161 and cysteine 211/cysteine 212. 3 consecutive transmembrane segments (helical) span residues 231–252, 261–279, and 295–314; these read YYGF…LGFT, ITLQ…SIVS, and FFTC…VYVL. Topologically, residues 315-472 are cytoplasmic; sequence NLHYRTPETH…WKFAAMVVDR (158 aa). The chain crosses the membrane as a helical span at residues 473–493; that stretch reads LCLYVFTIFIIVSTIGIFWSA.

This sequence belongs to the ligand-gated ion channel (TC 1.A.9) family. Acetylcholine receptor (TC 1.A.9.1) subfamily. As to expression, expressed in the body wall muscle.

The protein localises to the postsynaptic cell membrane. It is found in the cell membrane. In terms of biological role, after binding acetylcholine, the AChR responds by an extensive change in conformation that affects all subunits and leads to opening of an ion-conducting channel across the plasma membrane. A subunit of the levamisole-insensitive nicotinic receptor. The polypeptide is Acetylcholine receptor subunit alpha-type acr-16 (acr-16) (Caenorhabditis elegans).